The primary structure comprises 494 residues: Lysine--tRNA ligase (494 aa).

Residues glutamate 405 and glutamate 412 each contribute to the Mg(2+) site.

It belongs to the class-II aminoacyl-tRNA synthetase family. Homodimer. It depends on Mg(2+) as a cofactor.

It localises to the cytoplasm. The enzyme catalyses tRNA(Lys) + L-lysine + ATP = L-lysyl-tRNA(Lys) + AMP + diphosphate. The sequence is that of Lysine--tRNA ligase (lysS) from Geobacillus stearothermophilus (Bacillus stearothermophilus).